The following is a 416-amino-acid chain: Thyroid hormone receptor alpha (416 aa).

The interval 1–30 is disordered; the sequence is MEPISNVEDPNSSEGDEKRWPDGPKRKRKN. The modulating stretch occupies residues 1–58; it reads MEPISNVEDPNSSEGDEKRWPDGPKRKRKNSTCSVKSMSALSLSVQGYIPSYLEKDEP. The span at 15-24 shows a compositional bias: basic and acidic residues; it reads GDEKRWPDGP. Zn(2+) is bound by residues Cys59, Cys62, Cys76, Cys79, Cys97, Cys103, Cys113, and Cys116. NR C4-type zinc fingers lie at residues 59 to 79 and 97 to 121; these read CVVC…CEGC and CKYD…FRKC. A DNA-binding region (nuclear receptor) is located at residues 59–133; the sequence is CVVCGDKATG…VCMAMDLVLD (75 aa). Residues 169-413 enclose the NR LBD domain; sequence SEWELIRHVT…PPLFLEVFED (245 aa). 2 residues coordinate 3,3',5-triiodo-L-thyronine: Arg234 and Ser283.

The protein belongs to the nuclear hormone receptor family. NR1 subfamily.

The protein localises to the nucleus. Functionally, nuclear hormone receptor that can act as a repressor or activator of transcription. High affinity receptor for thyroid hormones, including triiodothyronine and thyroxine. The chain is Thyroid hormone receptor alpha (thra1) from Salmo salar (Atlantic salmon).